Consider the following 217-residue polypeptide: N-(5'-phosphoribosyl)anthranilate isomerase (217 aa).

The protein belongs to the TrpF family.

The enzyme catalyses N-(5-phospho-beta-D-ribosyl)anthranilate = 1-(2-carboxyphenylamino)-1-deoxy-D-ribulose 5-phosphate. Its pathway is amino-acid biosynthesis; L-tryptophan biosynthesis; L-tryptophan from chorismate: step 3/5. This Chlorobium phaeobacteroides (strain BS1) protein is N-(5'-phosphoribosyl)anthranilate isomerase.